The primary structure comprises 235 residues: MKKLEQLYEGKAKKVYKTDVEDVLIVDYKDDATAFNGEKRGTIVGKGVINNRMSNYIMKQLEKEGVPTHYIEELSDRETAVKKVQIVPLEVIIRNVSAGSFAKKLGIEEGRKLLCPTLEFSYKDDSLGDPMINSSYAKALGLATQEEIDTISTYAYKVNEVMIKYFEGIGIELIDFKIEFGRYHDQIILADEISPDTCRLWDIKTHEKLDKDRFRRDLGNVEDAYLEVFKRLGIE.

The protein belongs to the SAICAR synthetase family.

The enzyme catalyses 5-amino-1-(5-phospho-D-ribosyl)imidazole-4-carboxylate + L-aspartate + ATP = (2S)-2-[5-amino-1-(5-phospho-beta-D-ribosyl)imidazole-4-carboxamido]succinate + ADP + phosphate + 2 H(+). It functions in the pathway purine metabolism; IMP biosynthesis via de novo pathway; 5-amino-1-(5-phospho-D-ribosyl)imidazole-4-carboxamide from 5-amino-1-(5-phospho-D-ribosyl)imidazole-4-carboxylate: step 1/2. The chain is Phosphoribosylaminoimidazole-succinocarboxamide synthase from Lachnoclostridium phytofermentans (strain ATCC 700394 / DSM 18823 / ISDg) (Clostridium phytofermentans).